The sequence spans 382 residues: Anhydro-N-acetylmuramic acid kinase (382 aa).

22–29 (GTSMDGVD) is a binding site for ATP.

Belongs to the anhydro-N-acetylmuramic acid kinase family.

It catalyses the reaction 1,6-anhydro-N-acetyl-beta-muramate + ATP + H2O = N-acetyl-D-muramate 6-phosphate + ADP + H(+). It participates in amino-sugar metabolism; 1,6-anhydro-N-acetylmuramate degradation. The protein operates within cell wall biogenesis; peptidoglycan recycling. Its function is as follows. Catalyzes the specific phosphorylation of 1,6-anhydro-N-acetylmuramic acid (anhMurNAc) with the simultaneous cleavage of the 1,6-anhydro ring, generating MurNAc-6-P. Is required for the utilization of anhMurNAc either imported from the medium or derived from its own cell wall murein, and thus plays a role in cell wall recycling. This Burkholderia vietnamiensis (strain G4 / LMG 22486) (Burkholderia cepacia (strain R1808)) protein is Anhydro-N-acetylmuramic acid kinase.